The chain runs to 287 residues: ATP synthase gamma chain (287 aa).

This sequence belongs to the ATPase gamma chain family. In terms of assembly, F-type ATPases have 2 components, CF(1) - the catalytic core - and CF(0) - the membrane proton channel. CF(1) has five subunits: alpha(3), beta(3), gamma(1), delta(1), epsilon(1). CF(0) has three main subunits: a, b and c.

It localises to the cell inner membrane. Produces ATP from ADP in the presence of a proton gradient across the membrane. The gamma chain is believed to be important in regulating ATPase activity and the flow of protons through the CF(0) complex. The protein is ATP synthase gamma chain of Colwellia maris.